Reading from the N-terminus, the 354-residue chain is MRNLLDLSQDELANLLSPKFRAKQIYEWVYKKNARSFDEMTNISKDVRENLKSEFYLDPLTCVRSETSKDGSIKYLFKLTDGKTIESVLLPMKEEISSEDGSVERHARYTICVSSQVGCKMGCSFCLTAKGGFVRNLSAGEIVAQILWIKRENNIPYERRVNVVYMGMGEPLDNLTNVSKAVSILKDNDGLAIGARRQTISTSGLASQIKKLGELDLGVLLAISLHAVTDELRAKLMPINKAYNIAAVMDAVRAFPIDMRKRVMFEYLIMDKVNDNLSDAKALVKLLHGIKAKVNLILFNPHEGSQYQRPSIENVDNFRTYLQSRGVTCTIRQSKGLDISAACGQLKERSKVEM.

E86 serves as the catalytic Proton acceptor. Positions 105-338 (RHARYTICVS…CTIRQSKGLD (234 aa)) constitute a Radical SAM core domain. A disulfide bridge links C112 with C343. C119, C123, and C126 together coordinate [4Fe-4S] cluster. Residues 169–170 (GE), S201, 224–226 (SLH), and N300 contribute to the S-adenosyl-L-methionine site. C343 acts as the S-methylcysteine intermediate in catalysis.

Belongs to the radical SAM superfamily. RlmN family. [4Fe-4S] cluster serves as cofactor.

The protein resides in the cytoplasm. It catalyses the reaction adenosine(2503) in 23S rRNA + 2 reduced [2Fe-2S]-[ferredoxin] + 2 S-adenosyl-L-methionine = 2-methyladenosine(2503) in 23S rRNA + 5'-deoxyadenosine + L-methionine + 2 oxidized [2Fe-2S]-[ferredoxin] + S-adenosyl-L-homocysteine. The enzyme catalyses adenosine(37) in tRNA + 2 reduced [2Fe-2S]-[ferredoxin] + 2 S-adenosyl-L-methionine = 2-methyladenosine(37) in tRNA + 5'-deoxyadenosine + L-methionine + 2 oxidized [2Fe-2S]-[ferredoxin] + S-adenosyl-L-homocysteine. Its function is as follows. Specifically methylates position 2 of adenine 2503 in 23S rRNA and position 2 of adenine 37 in tRNAs. m2A2503 modification seems to play a crucial role in the proofreading step occurring at the peptidyl transferase center and thus would serve to optimize ribosomal fidelity. The polypeptide is Dual-specificity RNA methyltransferase RlmN (Campylobacter fetus subsp. fetus (strain 82-40)).